The primary structure comprises 623 residues: MTDYDVIVIGGGHAGCEAASASARLGARTVLITHKMDTIGVMSCNPAIGGLGKGHLVREIDALDGLMGRVADAAGIQFRLLNRRKGPAVRGPRTQADRKLYREAMQREISGIENLSVIEGDAFDLLTEDGVVCGTAMKDGRIFRAAAVVLTTGTFLKGLIHIGQRKIPAGRVGEEPSLGLSGTLRRFGLQLGRLKTGTPARLDGRTIDWDRVGRQGPDENPVPFSFMTDAIINRQIDCGVTRTTDATHKIIADNIHQSAMYSGQIEGVGPRYCPSIEDKIVRFGERDGHQIFLEPEGLDDDTVYPNGISTSLPEDVQDAFIRTIPGLEQVKILQPGYAIEYDHVDPRELELSLGVRKMPGLFLAGQINGTTGYEEAGAQGLVAGLNAALRSIGRAPHFFSRTDSYIGVMIDDLTSRGITEPYRMFTSRAEYRLSLRADNADMRLTPAGITLGCVGDARRQRFEAWKHSYETGRTLLQSLSVTPSEGKRFGLKLNQDGQRRTAFDILSYPDQSIAALKPLWPELQTIPAGVVEALEIDAAYAVYMERQATDIAGVRRDENTSIPDDFDYEVLPGLSNELKQKLAQHKPRNLAQAMKVDGVTPAAISLILSWLRRQVRQAQRVGG.

10 to 15 (GGGHAG) is a binding site for FAD. 269-283 (GPRYCPSIEDKIVRF) is a binding site for NAD(+).

It belongs to the MnmG family. In terms of assembly, homodimer. Heterotetramer of two MnmE and two MnmG subunits. It depends on FAD as a cofactor.

The protein resides in the cytoplasm. NAD-binding protein involved in the addition of a carboxymethylaminomethyl (cmnm) group at the wobble position (U34) of certain tRNAs, forming tRNA-cmnm(5)s(2)U34. This is tRNA uridine 5-carboxymethylaminomethyl modification enzyme MnmG from Rhizobium meliloti (strain 1021) (Ensifer meliloti).